Here is a 183-residue protein sequence, read N- to C-terminus: Putative 3-methyladenine DNA glycosylase (183 aa).

It belongs to the DNA glycosylase MPG family.

The chain is Putative 3-methyladenine DNA glycosylase from Legionella pneumophila (strain Corby).